We begin with the raw amino-acid sequence, 632 residues long: MLLTAPSSRGSRTQSGIANVSWWALSLLLLFSPTLVSAKSAADYYVRSLPGAPEGPLLKMHAGHIEVDAQNNGNLFFWHYQNRHIANRQRTVIWLNGGPGCSSMDGALMEIGPYRLKDNHTLEYNNGSWDEFANLLFVDQPVGTGFSYVSTNSYIHELDEMSAQFITFLEKWFQLFPEYEGDDIYIAGESYAGQHIPYIAKAIQERNNKIQNDQSVRWNLRGIVIGNGWISPAQQYPSYLTFAYEEGLVTEGSSLAKDLEVYQSVCESKISASPNAINIRDCEEILQQILARTKDTNRQCYNMYDVRLRDTYPSCGMNWPTDLVDVKPYLQRPDVVQALNINPEKKSGWEECSGAVSSTFNAANSLPSVQLLPELLESGIPILLFSGDKDLICNHVGTEQLINNMKWNGGTGFETSPGVWAPRHDWTFEGEPTGIYQYARNLTYVLFYNASHMVPYDLPRQSRDMLDRFMKVDIANIGGKPADSRIDGEKLPQTSVGGHPNSTAAEQQAKEKIKETEWKAYAKSGEAALIVVIIGVTVWGFFIWRSRRRNRGYQGVYQRDVGSGSILERFHNKRSGPADVEAGDFDESELDNLHSPGPEQEHYAVGDDSDEEGPNHHPAAPPSSTKPGGAQP.

Positions 1-38 are cleaved as a signal peptide; sequence MLLTAPSSRGSRTQSGIANVSWWALSLLLLFSPTLVSA. The Lumenal portion of the chain corresponds to 39-523; that stretch reads KSAADYYVRS…KETEWKAYAK (485 aa). 2 N-linked (GlcNAc...) asparagine glycosylation sites follow: N119 and N126. Active-site residues include S190 and D390. N-linked (GlcNAc...) asparagine glycans are attached at residues N441 and N449. Residue H452 is part of the active site. A disordered region spans residues 480–507; it reads KPADSRIDGEKLPQTSVGGHPNSTAAEQ. Over residues 492-506 the composition is skewed to polar residues; that stretch reads PQTSVGGHPNSTAAE. N501 carries an N-linked (GlcNAc...) asparagine glycan. A helical transmembrane segment spans residues 524–544; that stretch reads SGEAALIVVIIGVTVWGFFIW. Over 545 to 632 the chain is Cytoplasmic; the sequence is RSRRRNRGYQ…SSTKPGGAQP (88 aa). Positions 568-632 are disordered; the sequence is ERFHNKRSGP…SSTKPGGAQP (65 aa). The span at 581-590 shows a compositional bias: acidic residues; it reads EAGDFDESEL.

Belongs to the peptidase S10 family.

Its subcellular location is the golgi apparatus. It is found in the trans-Golgi network membrane. The enzyme catalyses Preferential release of a C-terminal arginine or lysine residue.. Protease with a carboxypeptidase B-like function involved in the C-terminal processing of the lysine and arginine residues from protein precursors. Promotes cell fusion and is involved in the programmed cell death. This is Pheromone-processing carboxypeptidase kex1 (kex1) from Neosartorya fischeri (strain ATCC 1020 / DSM 3700 / CBS 544.65 / FGSC A1164 / JCM 1740 / NRRL 181 / WB 181) (Aspergillus fischerianus).